Here is a 133-residue protein sequence, read N- to C-terminus: Putative elongation factor 1-delta-like protein (133 aa).

A compositionally biased stretch (low complexity) spans 58 to 73; that stretch reads SLAGSLGPGASSGPSG. 2 disordered regions span residues 58–77 and 89–133; these read SLAG…DHSE and NQRD…TSRG. The span at 89 to 102 shows a compositional bias: basic and acidic residues; that stretch reads NQRDLAERAGEELA.

Belongs to the EF-1-beta/EF-1-delta family.

The polypeptide is Putative elongation factor 1-delta-like protein (EEF1DP3) (Homo sapiens (Human)).